The chain runs to 302 residues: MFKKNTTHLRQLESESIYIMREVMSDFQNPVMLYSIGKDSSVMLHLAKKSFYPGTIPFPLLHIDTGWKFKEMYIFRDHIASTSNIELIVHSHSKGKLLGLNPFENGGSKYTDIMKTEGLKEAINKYNFDAAFGGARRDEEKSRSKERIYSFRDSLHQWDPKKQRPELWWNYNGQINKGENIRVFPLSNWTELDIWQYIFLEKIEIVPLYFAAKRPVLERNGVLTVIDDSRMKIKSNEVIKEKMVRFRTLGCWPLTNAIESEARNVEDIIKETLIVKTSERTGRAIDYDQKSSMEFKKRQGYF.

The protein belongs to the PAPS reductase family. CysD subfamily. Heterodimer composed of CysD, the smaller subunit, and CysN.

It catalyses the reaction sulfate + ATP + H(+) = adenosine 5'-phosphosulfate + diphosphate. It functions in the pathway sulfur metabolism; hydrogen sulfide biosynthesis; sulfite from sulfate: step 1/3. Its function is as follows. With CysN forms the ATP sulfurylase (ATPS) that catalyzes the adenylation of sulfate producing adenosine 5'-phosphosulfate (APS) and diphosphate, the first enzymatic step in sulfur assimilation pathway. APS synthesis involves the formation of a high-energy phosphoric-sulfuric acid anhydride bond driven by GTP hydrolysis by CysN coupled to ATP hydrolysis by CysD. This chain is Sulfate adenylyltransferase subunit 2, found in Buchnera aphidicola subsp. Acyrthosiphon pisum (strain 5A).